The primary structure comprises 741 residues: Double-stranded RNA-specific editase 1 (741 aa).

The tract at residues 1 to 79 (MDIEDEENMS…RRKTPGPVLP (79 aa)) is disordered. Ser26 bears the Phosphoserine mark. Over residues 33–49 (PGPGEGSQLSNGGGGGP) the composition is skewed to gly residues. Basic residues predominate over residues 63 to 73 (SKYRLKKRRKT). One can recognise a DRBM 1 domain in the interval 78 to 144 (LPKNALMQLN…AEKALRSFVQ (67 aa)). Interaction with substrate RNA regions lie at residues 83 to 88 (LMQLNE) and 104 to 105 (VH). Phosphoserine is present on Ser149. The 68-residue stretch at 231-298 (PSGKNPVMIL…AQSALAAIFN (68 aa)) folds into the DRBM 2 domain. Interaction with substrate RNA regions lie at residues 237-242 (VMILNE) and His259. The region spanning 370–737 (SVSTGTKCIN…VEKPTEQDQF (368 aa)) is the A to I editase domain. His394 is a binding site for Zn(2+). Glu396 serves as the catalytic Proton donor. 1D-myo-inositol hexakisphosphate is bound by residues Arg400 and Arg401. Residue Cys451 participates in Zn(2+) binding. A disordered region spans residues 486–518 (RPPGLLSDPSTSTFQGAGTTEPADRHPNRKARG). Polar residues predominate over residues 493–503 (DPSTSTFQGAG). Zn(2+) is bound at residue Cys556. 1D-myo-inositol hexakisphosphate contacts are provided by Lys559, Arg562, Lys669, Lys702, Lys712, and Lys730.

In terms of assembly, homodimer. Homodimerization is essential for its catalytic activity. Can form heterodimers with isoform 5 of ADAR/ADAR1. Requires 1D-myo-inositol hexakisphosphate as cofactor. In terms of tissue distribution, highly expressed in brain and heart and at lower levels in placenta. Fair expression in lung, liver and kidney. Detected in brain, heart, kidney, lung and liver (at protein level). As to expression, highly expressed in hippocampus and colon. Expressed in pediatric astrocytomas and the protein has a decreased RNA-editing activity. The decrease in RNA editing correlates with the grade of malignancy of the tumors, with the high grade tumors showing lower editing is seen.

The protein localises to the nucleus. Its subcellular location is the nucleolus. The catalysed reaction is adenosine in double-stranded RNA + H2O + H(+) = inosine in double-stranded RNA + NH4(+). In terms of biological role, catalyzes the hydrolytic deamination of adenosine to inosine in double-stranded RNA (dsRNA) referred to as A-to-I RNA editing. This may affect gene expression and function in a number of ways that include mRNA translation by changing codons and hence the amino acid sequence of proteins; pre-mRNA splicing by altering splice site recognition sequences; RNA stability by changing sequences involved in nuclease recognition; genetic stability in the case of RNA virus genomes by changing sequences during viral RNA replication; and RNA structure-dependent activities such as microRNA production or targeting or protein-RNA interactions. Can edit both viral and cellular RNAs and can edit RNAs at multiple sites (hyper-editing) or at specific sites (site-specific editing). Its cellular RNA substrates include: bladder cancer-associated protein (BLCAP), neurotransmitter receptors for glutamate (GRIA2 and GRIK2) and serotonin (HTR2C), GABA receptor (GABRA3) and potassium voltage-gated channel (KCNA1). Site-specific RNA editing of transcripts encoding these proteins results in amino acid substitutions which consequently alter their functional activities. Edits GRIA2 at both the Q/R and R/G sites efficiently but converts the adenosine in hotspot1 much less efficiently. Can exert a proviral effect towards human immunodeficiency virus type 1 (HIV-1) and enhances its replication via both an editing-dependent and editing-independent mechanism. The former involves editing of adenosines in the 5'UTR while the latter occurs via suppression of EIF2AK2/PKR activation and function. Can inhibit cell proliferation and migration and can stimulate exocytosis. Functionally, has a lower catalytic activity than isoform 2. Has a higher catalytic activity than isoform 1. The chain is Double-stranded RNA-specific editase 1 from Homo sapiens (Human).